We begin with the raw amino-acid sequence, 91 residues long: Small ribosomal subunit protein bS20 (91 aa).

Basic and acidic residues predominate over residues 1–21 (MPLHKSAEKRLRQAARRNERN). Residues 1–24 (MPLHKSAEKRLRQAARRNERNRAR) are disordered.

This sequence belongs to the bacterial ribosomal protein bS20 family.

Functionally, binds directly to 16S ribosomal RNA. The protein is Small ribosomal subunit protein bS20 of Chlorobaculum parvum (strain DSM 263 / NCIMB 8327) (Chlorobium vibrioforme subsp. thiosulfatophilum).